The following is a 648-amino-acid chain: Acetyl-coenzyme A synthetase (648 aa).

CoA contacts are provided by residues 190–193, Thr308, and Asn332; that span reads RGGK. Residues 384–386, 408–413, Asp497, and Arg512 contribute to the ATP site; these read GEP and DTWWQT. Ser520 serves as a coordination point for CoA. Arg523 serves as a coordination point for ATP. 3 residues coordinate Mg(2+): Val534, His536, and Val539. Arg581 is a binding site for CoA. Position 606 is an N6-acetyllysine (Lys606).

This sequence belongs to the ATP-dependent AMP-binding enzyme family. Mg(2+) is required as a cofactor. Acetylated. Deacetylation by the SIR2-homolog deacetylase activates the enzyme.

The catalysed reaction is acetate + ATP + CoA = acetyl-CoA + AMP + diphosphate. Its function is as follows. Catalyzes the conversion of acetate into acetyl-CoA (AcCoA), an essential intermediate at the junction of anabolic and catabolic pathways. AcsA undergoes a two-step reaction. In the first half reaction, AcsA combines acetate with ATP to form acetyl-adenylate (AcAMP) intermediate. In the second half reaction, it can then transfer the acetyl group from AcAMP to the sulfhydryl group of CoA, forming the product AcCoA. The polypeptide is Acetyl-coenzyme A synthetase (Bradyrhizobium diazoefficiens (strain JCM 10833 / BCRC 13528 / IAM 13628 / NBRC 14792 / USDA 110)).